An 82-amino-acid chain; its full sequence is ATP synthase subunit c (82 aa).

A run of 2 helical transmembrane segments spans residues 7-27 (AASVLAAALAVGLAAIGPGIG) and 57-77 (LAFMEALTIYGLVVALVLLFA).

Belongs to the ATPase C chain family. As to quaternary structure, F-type ATPases have 2 components, F(1) - the catalytic core - and F(0) - the membrane proton channel. F(1) has five subunits: alpha(3), beta(3), gamma(1), delta(1), epsilon(1). F(0) has four main subunits: a(1), b(1), b'(1) and c(10-14). The alpha and beta chains form an alternating ring which encloses part of the gamma chain. F(1) is attached to F(0) by a central stalk formed by the gamma and epsilon chains, while a peripheral stalk is formed by the delta, b and b' chains.

Its subcellular location is the cellular thylakoid membrane. F(1)F(0) ATP synthase produces ATP from ADP in the presence of a proton or sodium gradient. F-type ATPases consist of two structural domains, F(1) containing the extramembraneous catalytic core and F(0) containing the membrane proton channel, linked together by a central stalk and a peripheral stalk. During catalysis, ATP synthesis in the catalytic domain of F(1) is coupled via a rotary mechanism of the central stalk subunits to proton translocation. Functionally, key component of the F(0) channel; it plays a direct role in translocation across the membrane. A homomeric c-ring of between 10-14 subunits forms the central stalk rotor element with the F(1) delta and epsilon subunits. The polypeptide is ATP synthase subunit c (Synechococcus sp. (strain WH7803)).